The chain runs to 854 residues: Golgin subfamily A member 6-like protein 22 (854 aa).

Disordered stretches follow at residues Met1–Ala114, Gln320–Gln348, Met366–Gln447, Gln481–Gln568, Arg581–Glu681, and Gln714–His854. Residues Leu15–Thr35 are compositionally biased toward basic residues. Residues Met45–Pro66 are compositionally biased toward basic and acidic residues. Composition is skewed to polar residues over residues Gln67–Ser77 and Asn85–Gly97. Residues Ser100 to Ala114 show a composition bias toward basic and acidic residues. Residues Asp103–His854 are a coiled coil.

This sequence belongs to the GOLGA6 family.

The chain is Golgin subfamily A member 6-like protein 22 from Homo sapiens (Human).